A 72-amino-acid polypeptide reads, in one-letter code: Translation initiation factor IF-1 (72 aa).

An S1-like domain is found at 2 to 72; the sequence is AKEDVIEVEG…TRGRITYRYK (71 aa). At Tyr-60 the chain carries Phosphotyrosine.

It belongs to the IF-1 family. As to quaternary structure, component of the 30S ribosomal translation pre-initiation complex which assembles on the 30S ribosome in the order IF-2 and IF-3, IF-1 and N-formylmethionyl-tRNA(fMet); mRNA recruitment can occur at any time during PIC assembly.

It localises to the cytoplasm. Functionally, one of the essential components for the initiation of protein synthesis. Stabilizes the binding of IF-2 and IF-3 on the 30S subunit to which N-formylmethionyl-tRNA(fMet) subsequently binds. Helps modulate mRNA selection, yielding the 30S pre-initiation complex (PIC). Upon addition of the 50S ribosomal subunit IF-1, IF-2 and IF-3 are released leaving the mature 70S translation initiation complex. The chain is Translation initiation factor IF-1 from Halalkalibacterium halodurans (strain ATCC BAA-125 / DSM 18197 / FERM 7344 / JCM 9153 / C-125) (Bacillus halodurans).